A 492-amino-acid chain; its full sequence is Virion host shutoff protein (492 aa).

Disordered stretches follow at residues 110-130 (EEAS…SRPS), 143-165 (FAPG…GAPS), 288-307 (SQAR…LESM), and 334-369 (EDDY…PPEL). Residues 144 to 165 (APGDRGTRAAGPGPAAPSGAPS) are compositionally biased toward low complexity.

This sequence belongs to the herpesviridae VHS protein family. In terms of assembly, interacts with human EIF4H, EIF4A1 and EIF4A2; interaction with eIF4AI and EIF4A2 presumably allows Vhs protein to associate with the eIF4F cap-binding complex.

Its subcellular location is the virion. In terms of biological role, minor structural protein that acts as an endoribonuclease during lytic infection. Degrades host mRNAs in the cytoplasm by cutting them at preferred sites, including some in regions of translation initiation. Together with inhibition of host splicing by ICP27, contributes to an overall decrease in host protein synthesis. Also, after the onset of viral transcription, accelerates the turnover of viral mRNA, thereby facilitating the sequential expression of different classes of viral genes. Binds translation initiation factors eIF4H, eIF4AI, and eIF4AII, thereby may interact directly with the translation initiation complex and thus digest specifically mRNAs. Also impedes antigen presentation by major histocompatibility complex class I and class II molecules, inhibits secretion of cytokines that would otherwise recruit lymphocytes and neutrophils cells to the site of infection and blocks the activation of dendritic cells. Impedes the alpha/beta interferon-mediated response to infection. Inhibits the integrated stress response (ISR) in the infected cell, this function requires the endonuclease activity. Stress granule formation is thus inhibited, which allows protein synthesis and viral replication. The polypeptide is Virion host shutoff protein (UL41) (Human herpesvirus 2 (strain G) (HHV-2)).